The sequence spans 196 residues: ATP-dependent Clp protease proteolytic subunit (196 aa).

Residue S101 is the Nucleophile of the active site. H126 is an active-site residue.

It belongs to the peptidase S14 family. Component of the chloroplastic Clp protease core complex.

The protein resides in the plastid. Its subcellular location is the chloroplast stroma. It catalyses the reaction Hydrolysis of proteins to small peptides in the presence of ATP and magnesium. alpha-casein is the usual test substrate. In the absence of ATP, only oligopeptides shorter than five residues are hydrolyzed (such as succinyl-Leu-Tyr-|-NHMec, and Leu-Tyr-Leu-|-Tyr-Trp, in which cleavage of the -Tyr-|-Leu- and -Tyr-|-Trp bonds also occurs).. In terms of biological role, cleaves peptides in various proteins in a process that requires ATP hydrolysis. Has a chymotrypsin-like activity. Plays a major role in the degradation of misfolded proteins. In Helianthus annuus (Common sunflower), this protein is ATP-dependent Clp protease proteolytic subunit.